Reading from the N-terminus, the 363-residue chain is Ribosomal RNA large subunit methyltransferase M (363 aa).

Residues S194, 227-230 (CPGG), D246, D266, and D284 each bind S-adenosyl-L-methionine. K313 acts as the Proton acceptor in catalysis.

This sequence belongs to the class I-like SAM-binding methyltransferase superfamily. RNA methyltransferase RlmE family. RlmM subfamily. As to quaternary structure, monomer.

The protein resides in the cytoplasm. The catalysed reaction is cytidine(2498) in 23S rRNA + S-adenosyl-L-methionine = 2'-O-methylcytidine(2498) in 23S rRNA + S-adenosyl-L-homocysteine + H(+). In terms of biological role, catalyzes the 2'-O-methylation at nucleotide C2498 in 23S rRNA. This is Ribosomal RNA large subunit methyltransferase M from Haemophilus influenzae (strain PittEE).